We begin with the raw amino-acid sequence, 49 residues long: Large ribosomal subunit protein bL34 (49 aa).

This sequence belongs to the bacterial ribosomal protein bL34 family.

In Sorangium cellulosum (strain So ce56) (Polyangium cellulosum (strain So ce56)), this protein is Large ribosomal subunit protein bL34.